Here is a 607-residue protein sequence, read N- to C-terminus: Dihydroxy-acid dehydratase (607 aa).

Residue Asp-81 participates in Mg(2+) binding. Cys-122 is a [2Fe-2S] cluster binding site. Mg(2+)-binding residues include Asp-123 and Lys-124. An N6-carboxylysine modification is found at Lys-124. Cys-195 serves as a coordination point for [2Fe-2S] cluster. Residue Glu-489 coordinates Mg(2+). The active-site Proton acceptor is Ser-515.

The protein belongs to the IlvD/Edd family. Homodimer. [2Fe-2S] cluster is required as a cofactor. The cofactor is Mg(2+).

The catalysed reaction is (2R)-2,3-dihydroxy-3-methylbutanoate = 3-methyl-2-oxobutanoate + H2O. It carries out the reaction (2R,3R)-2,3-dihydroxy-3-methylpentanoate = (S)-3-methyl-2-oxopentanoate + H2O. It functions in the pathway amino-acid biosynthesis; L-isoleucine biosynthesis; L-isoleucine from 2-oxobutanoate: step 3/4. It participates in amino-acid biosynthesis; L-valine biosynthesis; L-valine from pyruvate: step 3/4. Functions in the biosynthesis of branched-chain amino acids. Catalyzes the dehydration of (2R,3R)-2,3-dihydroxy-3-methylpentanoate (2,3-dihydroxy-3-methylvalerate) into 2-oxo-3-methylpentanoate (2-oxo-3-methylvalerate) and of (2R)-2,3-dihydroxy-3-methylbutanoate (2,3-dihydroxyisovalerate) into 2-oxo-3-methylbutanoate (2-oxoisovalerate), the penultimate precursor to L-isoleucine and L-valine, respectively. The chain is Dihydroxy-acid dehydratase from Deinococcus radiodurans (strain ATCC 13939 / DSM 20539 / JCM 16871 / CCUG 27074 / LMG 4051 / NBRC 15346 / NCIMB 9279 / VKM B-1422 / R1).